Consider the following 335-residue polypeptide: N-acetyl-gamma-glutamyl-phosphate reductase (335 aa).

Cys156 is an active-site residue.

Belongs to the NAGSA dehydrogenase family. Type 1 subfamily.

The protein resides in the cytoplasm. The enzyme catalyses N-acetyl-L-glutamate 5-semialdehyde + phosphate + NADP(+) = N-acetyl-L-glutamyl 5-phosphate + NADPH + H(+). The protein operates within amino-acid biosynthesis; L-arginine biosynthesis; N(2)-acetyl-L-ornithine from L-glutamate: step 3/4. Catalyzes the NADPH-dependent reduction of N-acetyl-5-glutamyl phosphate to yield N-acetyl-L-glutamate 5-semialdehyde. This is N-acetyl-gamma-glutamyl-phosphate reductase from Aeromonas salmonicida (strain A449).